The chain runs to 247 residues: tRNA (guanine-N(1)-)-methyltransferase (247 aa).

S-adenosyl-L-methionine is bound by residues Gly-117 and 136-141; that span reads LGDFVL.

The protein belongs to the RNA methyltransferase TrmD family. Homodimer.

It is found in the cytoplasm. The catalysed reaction is guanosine(37) in tRNA + S-adenosyl-L-methionine = N(1)-methylguanosine(37) in tRNA + S-adenosyl-L-homocysteine + H(+). Its function is as follows. Specifically methylates guanosine-37 in various tRNAs. This Myxococcus xanthus (strain DK1622) protein is tRNA (guanine-N(1)-)-methyltransferase.